We begin with the raw amino-acid sequence, 249 residues long: 14-3-3-like protein D (249 aa).

The protein belongs to the 14-3-3 family.

The chain is 14-3-3-like protein D from Nicotiana tabacum (Common tobacco).